The chain runs to 107 residues: Nucleoid-associated protein amb4104 (107 aa).

It belongs to the YbaB/EbfC family. Homodimer.

It localises to the cytoplasm. The protein resides in the nucleoid. In terms of biological role, binds to DNA and alters its conformation. May be involved in regulation of gene expression, nucleoid organization and DNA protection. The polypeptide is Nucleoid-associated protein amb4104 (Paramagnetospirillum magneticum (strain ATCC 700264 / AMB-1) (Magnetospirillum magneticum)).